Consider the following 318-residue polypeptide: Sensor histidine kinase NatK (318 aa).

Transmembrane regions (helical) follow at residues 4–24, 27–47, and 72–82; these read LFQC…AAAF, STAA…LYIW, and VGVVLIGTDIM. The 187-residue stretch at 132-318 folds into the Histidine kinase domain; that stretch reads RNHDTMKHIT…RLEIKIPFQK (187 aa). A Phosphohistidine; by autocatalysis modification is found at H134.

The protein localises to the cell membrane. The catalysed reaction is ATP + protein L-histidine = ADP + protein N-phospho-L-histidine.. Its function is as follows. Member of the two-component regulatory system NatK/NatR that positively regulates the expression of the natAB operon. Potentially phosphorylates NatR. The chain is Sensor histidine kinase NatK from Bacillus subtilis (strain 168).